The following is a 285-amino-acid chain: Phosphate import ATP-binding protein PstB (285 aa).

In terms of domain architecture, ABC transporter spans 22–262 (MRAVDLTLGF…PQHEETVRYF (241 aa)). 54 to 61 (GPTGSGKT) is an ATP binding site. The interval 266-285 (RPAQGSDRGSSQTAGVAESQ) is disordered. The segment covering 272–285 (DRGSSQTAGVAESQ) has biased composition (polar residues).

Belongs to the ABC transporter superfamily. Phosphate importer (TC 3.A.1.7) family. The complex is composed of two ATP-binding proteins (PstB), two transmembrane proteins (PstC and PstA) and a solute-binding protein (PstS).

The protein localises to the cell membrane. It carries out the reaction phosphate(out) + ATP + H2O = ADP + 2 phosphate(in) + H(+). Part of the ABC transporter complex PstSACB involved in phosphate import. Responsible for energy coupling to the transport system. In Mycobacterium intracellulare, this protein is Phosphate import ATP-binding protein PstB.